A 121-amino-acid chain; its full sequence is Phospholipase A2 homolog EPL_00195 (121 aa).

7 disulfide bridges follow: Cys25–Cys114, Cys27–Cys43, Cys42–Cys94, Cys48–Cys121, Cys49–Cys87, Cys56–Cys80, and Cys74–Cys85. The interval 104-116 (KKYRIYPNFLCRG) is important for membrane-damaging activities in eukaryotes and bacteria; heparin-binding.

This sequence belongs to the phospholipase A2 family. Group II subfamily. S49 sub-subfamily. Monomer. In terms of tissue distribution, expressed by the venom gland.

It is found in the secreted. Its function is as follows. Snake venom phospholipase A2 homolog that lacks enzymatic activity. Shows high myotoxin activities and displays edema-inducing activities. Has cytotoxic activities against HUVEC cells (LC(50)=2.5 uL) and human lung adenocarcinoma A549 cells (LC(50)=2.9 uL). This chain is Phospholipase A2 homolog EPL_00195, found in Echis pyramidum leakeyi (Leakey's carpet viper).